A 132-amino-acid chain; its full sequence is Large ribosomal subunit protein uL14 (132 aa).

The protein belongs to the universal ribosomal protein uL14 family. Part of the 50S ribosomal subunit. Forms a cluster with proteins L3 and L24e, part of which may contact the 16S rRNA in 2 intersubunit bridges.

Its function is as follows. Binds to 23S rRNA. Forms part of two intersubunit bridges in the 70S ribosome. In Archaeoglobus fulgidus (strain ATCC 49558 / DSM 4304 / JCM 9628 / NBRC 100126 / VC-16), this protein is Large ribosomal subunit protein uL14.